Reading from the N-terminus, the 245-residue chain is MGRLEGKVIVLTAAAQGIGRASALAFAREGAKVIATDINEAKLQELENYPGIQTRVLDVTKKRQIDQFASEIEKIDVLFNVAGFVHHGTILDCEEKDWDFSMNLNVRSMYLMIKAFLPKMLAQKSGNIINMSSVASSIKGVENRCVYSATKAAVIGLTKSVAADFIQQGIRCNCVCPGTVDTPSLQERIQARDDPKEALKAFLNRQKTGRFASAEEVALLCVYLASDESAYVTGTPVVIDGGWSL.

NAD(+)-binding positions include 16-18 (QGI), Asp37, and Asp58. Arg144 contributes to the substrate binding site. Residue Tyr147 is the Proton acceptor of the active site. NAD(+) is bound by residues Lys151 and 180–184 (VDTPS). Residues Arg188 and Arg205 each coordinate substrate.

This sequence belongs to the short-chain dehydrogenases/reductases (SDR) family. As to quaternary structure, homotetramer.

The protein localises to the cytoplasm. The catalysed reaction is cis-4-hydroxy-L-proline + NAD(+) = 4-oxo-L-proline + NADH + H(+). It carries out the reaction (R)-3-hydroxybutanoate + NAD(+) = acetoacetate + NADH + H(+). It functions in the pathway amino-acid metabolism. Its pathway is siderophore biosynthesis. Functionally, NAD(H)-dependent dehydrogenase/reductase with a preference for cyclic substrates. Catalyzes stereoselective conversion of 4-oxo-L-proline to cis-4-hydroxy-L-proline, likely a detoxification mechanism for ketoprolines. Mediates the formation of 2,5-dihydroxybenzoate (2,5-DHBA), a siderophore that chelates free cytoplasmic iron and associates with LCN2, thereby regulating iron transport and homeostasis while protecting cells against free radical-induced oxidative stress. The iron-siderophore complex is imported into mitochondria, providing an iron source for mitochondrial metabolic processes in particular heme synthesis. May act as a 3-hydroxybutyrate dehydrogenase. The sequence is that of Dehydrogenase/reductase SDR family member 6 from Rattus norvegicus (Rat).